The chain runs to 243 residues: Phosphoadenosine 5'-phosphosulfate reductase (243 aa).

Catalysis depends on Cys239, which acts as the Nucleophile; cysteine thiosulfonate intermediate.

The protein belongs to the PAPS reductase family. CysH subfamily.

Its subcellular location is the cytoplasm. The enzyme catalyses [thioredoxin]-disulfide + sulfite + adenosine 3',5'-bisphosphate + 2 H(+) = [thioredoxin]-dithiol + 3'-phosphoadenylyl sulfate. The protein operates within sulfur metabolism; hydrogen sulfide biosynthesis; sulfite from sulfate: step 3/3. In terms of biological role, catalyzes the formation of sulfite from phosphoadenosine 5'-phosphosulfate (PAPS) using thioredoxin as an electron donor. The chain is Phosphoadenosine 5'-phosphosulfate reductase from Erwinia tasmaniensis (strain DSM 17950 / CFBP 7177 / CIP 109463 / NCPPB 4357 / Et1/99).